Here is a 310-residue protein sequence, read N- to C-terminus: Glutaminase (310 aa).

S67, N118, E161, N168, Y192, Y244, and V262 together coordinate substrate.

Belongs to the glutaminase family. Homotetramer.

The catalysed reaction is L-glutamine + H2O = L-glutamate + NH4(+). This chain is Glutaminase, found in Legionella pneumophila (strain Corby).